The primary structure comprises 507 residues: MVTIRADEISNIIRERIEQYNREVTIVNTGTVLQVGDGIARIYGLDEVMAGELVEFEEGTIGIALNLESNNVGVVLMGDGLMIQEGSSVKATGKIAQIPVSEAYLGRVINALANPIDGRGKISASESRLIESPAPGIISRRSVYEPLQTGLIAIDSMIPIGRGQRELIIGDRQTGKTAVATDTILNQQGQNVICVYVAIGQKASSVAQVVTSLQERGAMEYTIVVAETADSPATLQYLAPYTGAALAEYFMYREQHTLIIYDDLSKQAQAYRQMSLLLRRPPGREAYPGDVFYLHSRLLERAAKLSSQLGEGSMTALPIVETQSGDVSAYIPTNVISITDGQIFLSADLFNAGIRPAINVGISVSRVGSAAQIKAMKQVAGKLKLELAQFAELEAFAQFSSDLDKATQNQLARGQRLRELLKQSQSAPLTVEEQIMTIYTGTNGYLDGLEIGQVRKFLVQLRTYLKTNKPQFQEIISSTKTLTAEAESFLKEGIQEQLERFLLQEKL.

Residue 170–177 (GDRQTGKT) coordinates ATP. Phosphothreonine is present on Thr257.

It belongs to the ATPase alpha/beta chains family. F-type ATPases have 2 components, CF(1) - the catalytic core - and CF(0) - the membrane proton channel. CF(1) has five subunits: alpha(3), beta(3), gamma(1), delta(1), epsilon(1). CF(0) has four main subunits: a, b, b' and c.

The protein localises to the plastid. It is found in the chloroplast thylakoid membrane. It carries out the reaction ATP + H2O + 4 H(+)(in) = ADP + phosphate + 5 H(+)(out). Functionally, produces ATP from ADP in the presence of a proton gradient across the membrane. The alpha chain is a regulatory subunit. The sequence is that of ATP synthase subunit alpha, chloroplastic from Arabis hirsuta (Hairy rock-cress).